The sequence spans 144 residues: uncharacterized protein (144 aa).

Helical transmembrane passes span 76-96 (LLSALLMYVVPLLTLLIVTML) and 105-125 (ILRAILIFGLTALSFILVKSY).

The protein belongs to the RseC family.

It is found in the cell inner membrane. This is an uncharacterized protein from Haemophilus influenzae (strain ATCC 51907 / DSM 11121 / KW20 / Rd).